Here is a 524-residue protein sequence, read N- to C-terminus: NAD(P)H-quinone oxidoreductase chain 4, chloroplastic (524 aa).

14 helical membrane passes run 4–24 (YPWL…IPLI), 31–51 (LIRW…TYVF), 87–107 (IALV…AWPV), 113–133 (LFYF…LAQD), 134–154 (LLLF…LLSM), 167–187 (FILY…TISL), 211–231 (ILVY…FPFH), 242–262 (HYST…YGFI), 275–295 (IFAP…ALVS), 308–328 (SSVS…DLGL), 330–350 (GAIL…FLAG), 386–406 (LALP…GIVA), 417–437 (IITC…LSMV), and 465–485 (VFII…PDLT).

The protein belongs to the complex I subunit 4 family.

It localises to the plastid. The protein localises to the chloroplast thylakoid membrane. The enzyme catalyses a plastoquinone + NADH + (n+1) H(+)(in) = a plastoquinol + NAD(+) + n H(+)(out). It carries out the reaction a plastoquinone + NADPH + (n+1) H(+)(in) = a plastoquinol + NADP(+) + n H(+)(out). The chain is NAD(P)H-quinone oxidoreductase chain 4, chloroplastic from Staurastrum punctulatum (Green alga).